Consider the following 75-residue polypeptide: Protein BRICK1 (75 aa).

Ala-2 is subject to N-acetylalanine. The stretch at 41–72 (MSCRSRLATLNEKLTALERRIEYIEARVTKGE) forms a coiled coil.

This sequence belongs to the BRK1 family. Homotrimer when in free form. Directly interacts with WASF2. Component of the WAVE1 complex composed of ABI2, CYFIP1 or CYFIP2, BRK1, NCKAP1 and WASF1/WAVE1. Within the complex, a heterodimer containing NCKAP1 and CYFIP1 interacts with a heterotrimer formed by WAVE1, ABI2 and BRK1.

The protein localises to the cytoplasm. The protein resides in the cytoskeleton. Involved in regulation of actin and microtubule organization. Part of a WAVE complex that activates the Arp2/3 complex. As component of the WAVE1 complex, required for BDNF-NTRK2 endocytic trafficking and signaling from early endosomes. This Homo sapiens (Human) protein is Protein BRICK1 (BRK1).